The primary structure comprises 498 residues: Excisase C (498 aa).

In terms of domain architecture, Tyr recombinase spans 263–446 (KIIYSFDLFE…FGIENRKKAF (184 aa)). Catalysis depends on residues Arg-306, Lys-336, Arg-401, and His-424. Tyr-433 acts as the O-(3'-phospho-DNA)-tyrosine intermediate in catalysis.

It belongs to the XisA/XisC recombinase family.

Functionally, essential for DNA excision. Site specific recombinase necessary for the excision of the 10.5 kb hupL element during heterocyst differentiation. The polypeptide is Excisase C (xisC) (Nostoc sp. (strain PCC 7120 / SAG 25.82 / UTEX 2576)).